The primary structure comprises 506 residues: Aldehyde dehydrogenase [NAD(P)+] 1 (506 aa).

The Proton acceptor role is filled by Glu-268. Cys-302 serves as the catalytic Nucleophile.

This sequence belongs to the aldehyde dehydrogenase family.

Its subcellular location is the cytoplasm. The catalysed reaction is an aldehyde + NAD(+) + H2O = a carboxylate + NADH + 2 H(+). It carries out the reaction 3-aminopropanal + NAD(+) + H2O = beta-alanine + NADH + 2 H(+). Cytoplasmic aldehyde dehydrogenase involved in ethanol oxidation. Required for pantothenic acid production through the conversion of 3-aminopropanal to beta-alanine, an intermediate in pantothenic acid (vitamin B5) and coenzyme A (CoA) biosynthesis. This is Aldehyde dehydrogenase [NAD(P)+] 1 (ALD2) from Saccharomyces cerevisiae (strain ATCC 204508 / S288c) (Baker's yeast).